The chain runs to 356 residues: MSRILLAGGGTAGHVNPLLALADVLKVSGHATFALGTSEGIESRLVPNSGIDFFTIPKLPFPRRTSRHILCFPFKFFSSVKLVRSILIEHKIQVVVGFGGYVAAPAYAAAISLNIPYVVHESNARPGLANLLAAHFAKCVGISVIGALPCGKLVGTPIRRDLTAAASFDPVLAKEKLGLDPVRKLLLVFGGSQGSAKINMHMRAALPRVLKLCDEKNYLWQVLHITGYGDSIDVNMPHYSSVRYMDSMGYALSAADLVVSRAGSSTVAELCTFGIPAIYIPYPFGNGEQRRNVSHMESAARIIQENDLSQIRLEDELLELMTDDERREAMSIAAKRFAICNAAQNTASLIELALSS.

UDP-N-acetyl-alpha-D-glucosamine is bound by residues Thr11–Gly13, Asn123, Arg159, and Ser192.

It belongs to the glycosyltransferase 28 family. MurG subfamily.

It localises to the cell membrane. It catalyses the reaction di-trans,octa-cis-undecaprenyl diphospho-N-acetyl-alpha-D-muramoyl-L-alanyl-D-glutamyl-meso-2,6-diaminopimeloyl-D-alanyl-D-alanine + UDP-N-acetyl-alpha-D-glucosamine = di-trans,octa-cis-undecaprenyl diphospho-[N-acetyl-alpha-D-glucosaminyl-(1-&gt;4)]-N-acetyl-alpha-D-muramoyl-L-alanyl-D-glutamyl-meso-2,6-diaminopimeloyl-D-alanyl-D-alanine + UDP + H(+). It functions in the pathway cell wall biogenesis; peptidoglycan biosynthesis. In terms of biological role, cell wall formation. Catalyzes the transfer of a GlcNAc subunit on undecaprenyl-pyrophosphoryl-MurNAc-pentapeptide (lipid intermediate I) to form undecaprenyl-pyrophosphoryl-MurNAc-(pentapeptide)GlcNAc (lipid intermediate II). This is UDP-N-acetylglucosamine--N-acetylmuramyl-(pentapeptide) pyrophosphoryl-undecaprenol N-acetylglucosamine transferase from Tropheryma whipplei (strain Twist) (Whipple's bacillus).